We begin with the raw amino-acid sequence, 786 residues long: Endonuclease MutS2 (786 aa).

Residue 333-340 (GPNTGGKT) participates in ATP binding. A Smr domain is found at 711-786 (LDLRGERYDQ…GSGATIVNFK (76 aa)).

This sequence belongs to the DNA mismatch repair MutS family. MutS2 subfamily. In terms of assembly, homodimer. Binds to stalled ribosomes, contacting rRNA.

Its function is as follows. Endonuclease that is involved in the suppression of homologous recombination and thus may have a key role in the control of bacterial genetic diversity. In terms of biological role, acts as a ribosome collision sensor, splitting the ribosome into its 2 subunits. Detects stalled/collided 70S ribosomes which it binds and splits by an ATP-hydrolysis driven conformational change. Acts upstream of the ribosome quality control system (RQC), a ribosome-associated complex that mediates the extraction of incompletely synthesized nascent chains from stalled ribosomes and their subsequent degradation. Probably generates substrates for RQC. The sequence is that of Endonuclease MutS2 from Lacticaseibacillus paracasei (strain ATCC 334 / BCRC 17002 / CCUG 31169 / CIP 107868 / KCTC 3260 / NRRL B-441) (Lactobacillus paracasei).